Here is a 60-residue protein sequence, read N- to C-terminus: Antimicrobial peptide Eval151 (60 aa).

Residues 1–23 form the signal peptide; it reads MKVLPVLFLTLLVLISIPAETFC. Arginine amide is present on R36. The segment covering 36–54 has biased composition (basic and acidic residues); it reads RGKRNDFFRSDVSRDDESH. Positions 36–60 are disordered; the sequence is RGKRNDFFRSDVSRDDESHPSPGQK. Residues 37–60 constitute a propeptide that is removed on maturation; sequence GKRNDFFRSDVSRDDESHPSPGQK.

This sequence belongs to the non-disulfide-bridged peptide (NDBP) superfamily. Expressed by the venom gland.

The protein localises to the secreted. Probable antimicrobial peptide. Has no inhibitory activity against herpes simplex virus type 1 (HSV-1). The protein is Antimicrobial peptide Eval151 of Euscorpiops validus (Scorpion).